The following is a 369-amino-acid chain: Biglycan (369 aa).

A signal peptide spans 1–16; sequence MWPLWLVASLLALSQA. The propeptide occupies 17–37; that stretch reads LPFEQKGFWDFTLDDGLPMLN. Serine 42 and serine 48 each carry an O-linked (Xyl...) (glycosaminoglycan) serine glycan. 2 cysteine pairs are disulfide-bonded: cysteine 64-cysteine 70 and cysteine 68-cysteine 77. LRR repeat units lie at residues 83 to 103, 104 to 127, 128 to 151, 152 to 172, 173 to 196, 197 to 221, 222 to 242, 243 to 266, 267 to 290, 291 to 313, 314 to 343, and 344 to 369; these read KAVPKEISPDTMLLDLQNNDI, SELRADDFKGLHHLYALVLVNNKI, SKIHEKAFSPLRKLQKLYISKNHL, VEIPPNLPSSLVELRIHDNRI, RKVPKGVFSGLRNMNCIEMGGNPL, ENSGFEPGAFDGLKLNYLRISEAKL, TGIPKDLPETLNELHLDHNKI, QAIELEDLLRYSKLYRLGLGHNQI, RMIENGSLSFLPTLRELHLDNNKL, SRVPSGLPDLKLLQVVYLHTNNI, TKVGVNDFCPVGFGVKRAYYNGISLFNNPV, and PYWEVQPATFRCVTDRLAIQFGNYKK. N-linked (GlcNAc...) asparagine glycosylation is found at asparagine 271 and asparagine 312. Cysteine 322 and cysteine 355 are oxidised to a cystine.

This sequence belongs to the small leucine-rich proteoglycan (SLRP) family. SLRP class I subfamily. As to quaternary structure, homodimer. Forms a ternary complex with MFAP2 and ELN. In terms of processing, the two attached glycosaminoglycan chains can be either chondroitin sulfate or dermatan sulfate.

Its subcellular location is the secreted. The protein localises to the extracellular space. The protein resides in the extracellular matrix. Its function is as follows. May be involved in collagen fiber assembly. The chain is Biglycan (BGN) from Canis lupus familiaris (Dog).